The primary structure comprises 153 residues: Ribonuclease P protein component (153 aa).

Belongs to the RnpA family. In terms of assembly, consists of a catalytic RNA component (M1 or rnpB) and a protein subunit.

It carries out the reaction Endonucleolytic cleavage of RNA, removing 5'-extranucleotides from tRNA precursor.. Functionally, RNaseP catalyzes the removal of the 5'-leader sequence from pre-tRNA to produce the mature 5'-terminus. It can also cleave other RNA substrates such as 4.5S RNA. The protein component plays an auxiliary but essential role in vivo by binding to the 5'-leader sequence and broadening the substrate specificity of the ribozyme. The sequence is that of Ribonuclease P protein component from Helicobacter acinonychis (strain Sheeba).